Reading from the N-terminus, the 66-residue chain is Large ribosomal subunit protein eL29 (66 aa).

Positions M1 to S14 are enriched in polar residues. A disordered region spans residues M1–E66. Residues K15 to S31 are compositionally biased toward basic residues. Positions I47 to E66 are enriched in basic and acidic residues.

Belongs to the eukaryotic ribosomal protein eL29 family.

The protein localises to the cytoplasm. This Tetrahymena thermophila protein is Large ribosomal subunit protein eL29 (RPL29).